Reading from the N-terminus, the 215-residue chain is Methylthioribulose-1-phosphate dehydratase (215 aa).

The Zn(2+) site is built by His-103 and His-105.

The protein belongs to the aldolase class II family. MtnB subfamily. The cofactor is Zn(2+).

It carries out the reaction 5-(methylsulfanyl)-D-ribulose 1-phosphate = 5-methylsulfanyl-2,3-dioxopentyl phosphate + H2O. The protein operates within amino-acid biosynthesis; L-methionine biosynthesis via salvage pathway; L-methionine from S-methyl-5-thio-alpha-D-ribose 1-phosphate: step 2/6. Its function is as follows. Catalyzes the dehydration of methylthioribulose-1-phosphate (MTRu-1-P) into 2,3-diketo-5-methylthiopentyl-1-phosphate (DK-MTP-1-P). The sequence is that of Methylthioribulose-1-phosphate dehydratase from Sulfurihydrogenibium sp. (strain YO3AOP1).